We begin with the raw amino-acid sequence, 167 residues long: MADEATRRVVSEIPVLKTNAGPRDRELWVQRLKEEYQSLIRYVENNKNADNDWFRLESNKEGTRWFGKCWYIHDLLKYEFDIEFDIPITYPTTAPEIAVPELDGKTAKMYRGGKICLTDHFKPLWARNVPKFGLAHLMALGLGPWLAVEIPDLIQKGVIQHKEKCNQ.

C116 serves as the catalytic Glycyl thioester intermediate. K122 is covalently cross-linked (Glycyl lysine isopeptide (Lys-Gly) (interchain with G-Cter in UFM1)).

The protein belongs to the ubiquitin-conjugating enzyme family. UFC1 subfamily. As to quaternary structure, interacts with UBA5 (via C-terminus). Interacts with UFL1. Interacts with UFM1. Interacts with KIRREL3. In terms of processing, ufmylated at Lys-122. Deufmylated by UFSP1.

In terms of biological role, E2-like enzyme which specifically catalyzes the second step in ufmylation. Accepts the ubiquitin-like modifier UFM1 from the E1 enzyme UBA5 and forms an intermediate with UFM1 via a thioester linkage. Ufmylation is involved in various processes, such as ribosome recycling, response to DNA damage, interferon response or reticulophagy (also called ER-phagy). The protein is Ubiquitin-fold modifier-conjugating enzyme 1 of Homo sapiens (Human).